Reading from the N-terminus, the 493-residue chain is Serine/threonine-protein kinase chk-1 (493 aa).

Residues 26–286 (YRVIRTLGEG…IEQIKTDPWF (261 aa)) form the Protein kinase domain. ATP contacts are provided by residues 32–40 (LGEGAFGEV) and Lys56. The Proton acceptor role is filled by Asp150. A disordered region spans residues 308 to 348 (DENSPDCNISSTQQADAVSTAKRRHLETPDKVAHVERQNAS). Residues 312-324 (PDCNISSTQQADA) show a composition bias toward polar residues. Residues 333–344 (LETPDKVAHVER) are compositionally biased toward basic and acidic residues.

The protein belongs to the protein kinase superfamily. CAMK Ser/Thr protein kinase family. NIM1 subfamily.

The protein localises to the cytoplasm. The protein resides in the nucleus. It catalyses the reaction L-seryl-[protein] + ATP = O-phospho-L-seryl-[protein] + ADP + H(+). The enzyme catalyses L-threonyl-[protein] + ATP = O-phospho-L-threonyl-[protein] + ADP + H(+). Its function is as follows. Serine/threonine-protein kinase which is required for checkpoint-mediated cell cycle arrest and activation of DNA repair in response to the presence of DNA damage or unreplicated DNA. May also negatively regulate cell cycle progression during unperturbed cell cycles. Required for checkpoint mediated cell cycle arrest in response to DNA damage in germline cells. Essential for embryogenesis. This chain is Serine/threonine-protein kinase chk-1 (chk-1), found in Caenorhabditis briggsae.